A 423-amino-acid chain; its full sequence is Transducer protein Htr13 (423 aa).

The segment covering 1 to 19 (MTGPDNSLTDPSASPSTPV) has biased composition (polar residues). Residues 1–21 (MTGPDNSLTDPSASPSTPVAS) form a disordered region. A Methyl-accepting transducer domain is found at 152-388 (AVAELIERAR…ELTMMIDEAA (237 aa)).

It belongs to the methyl-accepting chemotaxis (MCP) protein family. Post-translationally, methylated by CheR.

Its subcellular location is the cytoplasm. Its function is as follows. Potentially involved in chemo- or phototactic signal transduction. This Halobacterium salinarum (strain ATCC 29341 / DSM 671 / R1) protein is Transducer protein Htr13 (htr13).